A 332-amino-acid chain; its full sequence is Multiple virulence factor regulator MvfR (332 aa).

Residues 4 to 61 (HNLNHVNMFLQVIASGSISSAARILRKSHTAVSSAVSNLEIDLCVELVRRDGYKVEPT) enclose the HTH lysR-type domain. A DNA-binding region (H-T-H motif) is located at residues 21 to 40 (ISSAARILRKSHTAVSSAVS).

It belongs to the LysR transcriptional regulatory family. In terms of assembly, forms homooligomers.

Its subcellular location is the cell inner membrane. The protein resides in the secreted. Both 3,4-dihydroxy-2-heptylquinoline (PQS) and its precursor 4-hydroxy-2-heptylquinoline (HHQ) function as ligands and promote MvfR DNA-binding activity leading to transcriptional activation. Its function is as follows. Transcription regulator that plays a critical role in virulence by positively regulating the expression of multiple quorum sensing (QS)-regulated virulence factors, genes involved in protein secretion, translation, response to oxidative stress and the phnAB operon. At the stationary phase, negatively autoregulates its function through cleavage and translocation to the extracellular space. This chain is Multiple virulence factor regulator MvfR, found in Pseudomonas aeruginosa (strain ATCC 15692 / DSM 22644 / CIP 104116 / JCM 14847 / LMG 12228 / 1C / PRS 101 / PAO1).